A 324-amino-acid chain; its full sequence is Pseudouridine-5'-phosphate glycosidase (324 aa).

Catalysis depends on Glu43, which acts as the Proton donor. Residues Lys104 and Val124 each contribute to the substrate site. Asp156 is a Mn(2+) binding site. Residue 158 to 160 participates in substrate binding; sequence SAD. The Nucleophile role is filled by Lys177.

It belongs to the pseudouridine-5'-phosphate glycosidase family. Homotrimer. The cofactor is Mn(2+).

It catalyses the reaction D-ribose 5-phosphate + uracil = psi-UMP + H2O. Its function is as follows. Catalyzes the reversible cleavage of pseudouridine 5'-phosphate (PsiMP) to ribose 5-phosphate and uracil. Functions biologically in the cleavage direction, as part of a pseudouridine degradation pathway. The chain is Pseudouridine-5'-phosphate glycosidase from Salinispora tropica (strain ATCC BAA-916 / DSM 44818 / JCM 13857 / NBRC 105044 / CNB-440).